The chain runs to 305 residues: Methionyl-tRNA formyltransferase (305 aa).

109–112 (SLLP) contacts (6S)-5,6,7,8-tetrahydrofolate.

Belongs to the Fmt family.

It catalyses the reaction L-methionyl-tRNA(fMet) + (6R)-10-formyltetrahydrofolate = N-formyl-L-methionyl-tRNA(fMet) + (6S)-5,6,7,8-tetrahydrofolate + H(+). In terms of biological role, attaches a formyl group to the free amino group of methionyl-tRNA(fMet). The formyl group appears to play a dual role in the initiator identity of N-formylmethionyl-tRNA by promoting its recognition by IF2 and preventing the misappropriation of this tRNA by the elongation apparatus. The polypeptide is Methionyl-tRNA formyltransferase (Paramagnetospirillum magneticum (strain ATCC 700264 / AMB-1) (Magnetospirillum magneticum)).